The following is a 502-amino-acid chain: Cytochrome P450 monooxygenase pyr9 (502 aa).

Residues 5–25 (EDASIGTVWVTCLLAVGLYFI) traverse the membrane as a helical segment. 3 N-linked (GlcNAc...) asparagine glycosylation sites follow: Asn205, Asn291, and Asn372. Cys437 contributes to the heme binding site.

This sequence belongs to the cytochrome P450 family. Heme serves as cofactor.

It is found in the membrane. It functions in the pathway secondary metabolite biosynthesis; terpenoid biosynthesis. In terms of biological role, cytochrome P450 monooxygenase; part of the gene cluster that mediates the biosynthesis of pyripyropene A, a specific human acyl-coenzyme A:cholesterol acyltransferase 2 inhibitor. The first step of the pathway is the synthesis of nicotinyl-CoA from nicotinic acid by the nicotinic acid-CoA ligase pyr1. Nicotinyl-CoA is then a substrate of polyketide synthase pyr2 to produce 4-hydroxy-6-(3-pyridinyl)-2H-pyran-2-one (HPPO) which is further prenylated by the polyprenyl transferase pyr6 to yield farnesyl-HPPO. The next steps consist of an epoxidation of farnesyl-HPPO to epoxyfarnesyl-HPPO by FAD-dependent monooxygenase pyr5 and a cyclization of the terpenoid portion by the terpene cyclase pyr4 to yield deacetyl-pyripyropene E. The 2 cytochrome P450 monooxygenases pyr3 and pyr9, and the 2 acetyltransferases pyr7 and pyr8 are involved in the conversion of deacetyl-pyripyropene E into pyripyropene A through several cycles of oxidation and acetylation steps. Pyr7 acetylates deacetyl-pyripyropene E to pyripyropene E which is oxidized to 11-deacetyl-pyripyropene O by pyr3, which is in turn acetylated into pyripyropene O by pyr8. Pyripyropene O is then oxidized to deacetyl-pyripyropene A by pyr9. Deacetyl-pyripyropene A is finally acetylated to pyripyropene A by pyr8. The polypeptide is Cytochrome P450 monooxygenase pyr9 (Aspergillus fumigatus (strain ATCC MYA-4609 / CBS 101355 / FGSC A1100 / Af293) (Neosartorya fumigata)).